A 354-amino-acid polypeptide reads, in one-letter code: Rhodopsin (354 aa).

At 1–36 (MNGTEGPAFYVPMSNATGVVRSPYEYPQYYLVAPWA) the chain is on the extracellular side. N-linked (GlcNAc...) asparagine glycans are attached at residues N2 and N15. The helical transmembrane segment at 37 to 61 (YGLLAAYMFFLIITGFPVNFLTLYV) threads the bilayer. Topologically, residues 62 to 73 (TIEHKKLRTPLN) are cytoplasmic. A helical membrane pass occupies residues 74-96 (YILLNLAIADLFMVFGGFTTTMY). Residues 97–110 (TSLHGYFVFGRLGC) lie on the Extracellular side of the membrane. Residues C110 and C187 are joined by a disulfide bond. A helical transmembrane segment spans residues 111-133 (NLEGFFATLGGEMGLWSLVVLAI). The 'Ionic lock' involved in activated form stabilization motif lies at 134 to 136 (ERW). At 134–152 (ERWMVVCKPVSNFRFGENH) the chain is on the cytoplasmic side. The helical transmembrane segment at 153–173 (AIMGVAFTWVMACSCAVPPLV) threads the bilayer. Residues 174 to 202 (GWSRYIPEGMQCSCGVDYYTRTPGVNNES) are Extracellular-facing. An N-linked (GlcNAc...) asparagine glycan is attached at N200. The helical transmembrane segment at 203–224 (FVIYMFIVHFFIPLIVIFFCYG) threads the bilayer. The Cytoplasmic segment spans residues 225 to 252 (RLVCTVKEAAAQQQESETTQRAEREVTR). Residues 253–274 (MVIIMVIAFLICWLPYAGVAWY) traverse the membrane as a helical segment. Residues 275–286 (IFTHQGSEFGPV) are Extracellular-facing. A helical membrane pass occupies residues 287-308 (FMTLPAFFAKTSAVYNPCIYIC). K296 carries the post-translational modification N6-(retinylidene)lysine. Residues 309-354 (MNKQFRHCMITTLCCGKNPFEEEEGASTTASKTEASSVSSSSVSPA) are Cytoplasmic-facing. The interval 333–354 (GASTTASKTEASSVSSSSVSPA) is disordered. Residues 334–354 (ASTTASKTEASSVSSSSVSPA) are compositionally biased toward low complexity.

The protein belongs to the G-protein coupled receptor 1 family. Opsin subfamily. Phosphorylated on some or all of the serine and threonine residues present in the C-terminal region. Post-translationally, contains one covalently linked retinal chromophore. Retinal rod photoreceptor cells, predominantly in the outer segments (at protein level). Retinal rod photoreceptor cells.

The protein resides in the membrane. Its subcellular location is the cell projection. It localises to the cilium. It is found in the photoreceptor outer segment. Photoreceptor required for image-forming vision at low light intensity. While most salt water fish species use retinal as chromophore, most freshwater fish use 3-dehydroretinal, or a mixture of retinal and 3-dehydroretinal. Light-induced isomerization of 11-cis to all-trans retinal triggers a conformational change that activates signaling via G-proteins. Subsequent receptor phosphorylation mediates displacement of the bound G-protein alpha subunit by arrestin and terminates signaling. The sequence is that of Rhodopsin (rho) from Danio rerio (Zebrafish).